We begin with the raw amino-acid sequence, 536 residues long: MVGASLGPPGRGSLSRLIRLVICVLTLCALSVQGRSESTEGHSKDLLYKYKLYGDIDEYAYYFLDIDIGTPEQRISLILDTGSSSLSFPCAGCKNCGVHMENPFNLNNSKTSSILYCENEECPFKLNCVKGKCEYMQSYCEGSQISGFYFSDVVSVVSYNNERVTFRKLMGCHMHEESLFLYQQATGVLGMSLSKPQGIPTFVNLLFDNAPQLKQVFTICISENGGELIAGGYDPAYIVRRGGSKSVSGQGSGPVSESLSESGEDPQVALREAEKVVWENVTRKYYYYIKVRGLDMFGTNMMSSSKGLEMLVDSGSTFTHIPEDLYNKLNYFFDILCIQDMNNAYDVNKRLKMTNESFNNPLVQFDDFRKSLKSIIAKENMCVKIVDGVQCWKYLEGLPDLFVTLSNNYKMKWQPHSYLYKKESFWCKGIEKQVNNKPILGLTFFKNRQVIFDIQKNRIGFVDANCPSHPTHTRPRTYNEYKRKDNIFLKIPFFYLYSLFVVFALSVLLSLVFYVRRLYHMEYSPLPSEGKAPADA.

An N-terminal signal peptide occupies residues 1–34; it reads MVGASLGPPGRGSLSRLIRLVICVLTLCALSVQG. Topologically, residues 35–492 are lumenal; sequence RSESTEGHSK…RKDNIFLKIP (458 aa). A Peptidase A1 domain is found at 62 to 462; that stretch reads YFLDIDIGTP…DIQKNRIGFV (401 aa). D80 is a catalytic residue. 7 disulfides stabilise this stretch: C90/C172, C93/C96, C117/C128, C122/C133, C220/C466, C337/C382, and C391/C427. Low complexity predominate over residues 244 to 258; it reads SKSVSGQGSGPVSES. A disordered region spans residues 244-264; sequence SKSVSGQGSGPVSESLSESGE. The active site involves D313. The chain crosses the membrane as a helical span at residues 493-513; sequence FFYLYSLFVVFALSVLLSLVF. Topologically, residues 514–536 are cytoplasmic; sequence YVRRLYHMEYSPLPSEGKAPADA.

It belongs to the peptidase A1 family. In terms of assembly, component of a complex composed of SPC25 and PMV; the interaction is mediated via the transmembrane domains. The complex interacts with the SEC61 channel-forming translocon complex and is involved in the recognition and import of PEXEL motif-containing proteins into the ER for subsequent export. It is not clear if the zymogen has a cleavable propeptide. Cleavage of the putative propeptide is dispensable for catalytic activity.

It is found in the endoplasmic reticulum membrane. With respect to regulation, inhibited by peptidomimetic inhibitors such as WEHI-842. Functionally, during the asexual blood stage, plays an essential role in the export of several proteins into the host erythrocytes by cleaving the pentameric localization motif RxLxE/Q/D (termed Plasmodium export element (PEXEL)) located downstream of the N-terminal secretory signal sequence. Specifically, cleaves after the leucine residue in the RxLxE/Q/D (or RxLxxE) motif of exported proteins including EMP1. Also, by regulating protein export, plays an essential role in gametocyte development and thus parasite transmission to the mosquito vector. The protein is Plasmepsin V of Plasmodium vivax (strain Salvador I).